The following is a 238-amino-acid chain: Group 3 late-embryogenesis abundant protein, mitochondrial (238 aa).

The interval 41-62 is disordered; that stretch reads SSGSGRPADNWAESQKEKAKAG. Positions 50 to 202 form a coiled coil; sequence NWAESQKEKA…AGDLKDKAQQ (153 aa). LEA 11-mer repeat repeat units follow at residues 64-74, 89-99, 140-150, 151-161, 179-189, and 190-200; these read KDAQAEVGKVA, KDAVKQGANDL, KEAAENAWEKT, KDVAENLKDKV, KDRAQDAASEV, and KHKAGDLKDKA. Composition is skewed to basic and acidic residues over residues 182 to 200 and 213 to 225; these read AQDA…KDKA and DNRK…RRDS. Positions 182 to 238 are disordered; sequence AQDAASEVKHKAGDLKDKAQQVIHDATTQSGDNRKQDQQQRRDSQGSQSGQNSRSRN. Residues 226-238 show a composition bias toward low complexity; sequence QGSQSGQNSRSRN.

Belongs to the LEA type 4 family.

Its subcellular location is the mitochondrion. In terms of biological role, mitochondrial heat soluble protein acting as a molecular shield in water-deficient condition. The chain is Group 3 late-embryogenesis abundant protein, mitochondrial from Hypsibius exemplaris (Freshwater tardigrade).